Here is a 378-residue protein sequence, read N- to C-terminus: Putative odorant receptor 71a (378 aa).

The Cytoplasmic portion of the chain corresponds to 1 to 37 (MDYDRIRPVRFLTGVLKWWRLWPRKESVSTPDWTNWQ). Residues 38 to 58 (AYALHVPFTFLFVLLLWLEAI) traverse the membrane as a helical segment. Topologically, residues 59–66 (KSRDIQHT) are extracellular. A helical transmembrane segment spans residues 67–87 (ADVLLICLTTTALGGKVINIW). Over 88-127 (KYAHVAQGILSEWSTWDLFELRSKQEVDMWRFEHRRFNRV) the chain is Cytoplasmic. The chain crosses the membrane as a helical span at residues 128 to 148 (FMFYCLCSAGVIPFIVIQPLF). At 149 to 166 (DIPNRLPFWMWTPFDWQQ) the chain is on the extracellular side. A helical transmembrane segment spans residues 167 to 187 (PVLFWYAFIYQATTIPIACAC). The Cytoplasmic portion of the chain corresponds to 188-255 (NVTMDAVNWY…IFISKSTFTQ (68 aa)). A helical transmembrane segment spans residues 256–276 (ILVSSLIICFTIYSMQMSPVL). The Extracellular segment spans residues 277 to 280 (QDLP). The helical transmembrane segment at 281–301 (GFAAMMQYLVAMIMQVMLPTI) threads the bilayer. The Cytoplasmic segment spans residues 302-343 (YGNAVIDSANMLTDSMYNSDWPDMNCRMRRLVLMFMVYLNRP). The helical transmembrane segment at 344-364 (VTLKAGGFFHIGLPLFTKTMN) threads the bilayer. Topologically, residues 365–378 (QAYSLLALLLNMNQ) are extracellular.

The protein belongs to the insect chemoreceptor superfamily. Heteromeric odorant receptor channel (TC 1.A.69) family. Or2a subfamily. Interacts with Orco. Complexes exist early in the endomembrane system in olfactory sensory neurons (OSNs), coupling these complexes to the conserved ciliary trafficking pathway. As to expression, expressed in olfactory sensory neurons in the maxillary palp.

The protein resides in the cell membrane. Functionally, odorant receptor which mediates acceptance or avoidance behavior, depending on its substrates. The odorant receptor repertoire encodes a large collection of odor stimuli that vary widely in identity, intensity, and duration. May form a complex with Orco to form odorant-sensing units, providing sensitive and prolonged odorant signaling and calcium permeability. The chain is Putative odorant receptor 71a (Or71a) from Drosophila melanogaster (Fruit fly).